The chain runs to 324 residues: Gamma-soluble NSF attachment protein (324 aa).

Positions 285–298 (NPTINSTAPQQQYS) are enriched in polar residues. Residues 285–324 (NPTINSTAPQQQYSNTTTTTTNNTNNNNPTSQQDDDEDVL) are disordered. A compositionally biased stretch (low complexity) spans 299–312 (NTTTTTTNNTNNNN).

Belongs to the SNAP family. As to quaternary structure, interacts with nsfA and probably SNARE proteins.

Its subcellular location is the cytoplasmic vesicle membrane. Functionally, may be required for vesicular transport between the endoplasmic reticulum and the Golgi apparatus. Involved in vesicle fusion with nsfA and probably SNARE proteins. This Dictyostelium discoideum (Social amoeba) protein is Gamma-soluble NSF attachment protein (snpC).